A 496-amino-acid polypeptide reads, in one-letter code: Polyphosphate:AMP phosphotransferase (496 aa).

2 PPK2 regions span residues 11–234 (IDKD…LQAA) and 269–495 (LDKD…YKKD).

The protein belongs to the polyphosphate kinase 2 (PPK2) family. Class II subfamily. Homodimer. It depends on Mg(2+) as a cofactor.

The catalysed reaction is [phosphate](n) + ADP = [phosphate](n+1) + AMP. Its function is as follows. Uses inorganic polyphosphate (polyP) as a donor to convert AMP to ADP. Can also convert GMP to GDP, with lower efficiency. Cannot dephosphorylate ADP in the presence of polyP. The polypeptide is Polyphosphate:AMP phosphotransferase (Pseudomonas aeruginosa (strain ATCC 15692 / DSM 22644 / CIP 104116 / JCM 14847 / LMG 12228 / 1C / PRS 101 / PAO1)).